The chain runs to 415 residues: Lipoyl synthase, mitochondrial (415 aa).

The transit peptide at 1-33 (MAASTSHLRSLCSSTRSLSRSGVIVTPIACRGY) directs the protein to the mitochondrion. [4Fe-4S] cluster contacts are provided by cysteine 132, cysteine 137, cysteine 143, cysteine 163, cysteine 167, cysteine 170, and serine 378. Residues 148–367 (DKSSATATIM…RQRALEMGFL (220 aa)) enclose the Radical SAM core domain.

Belongs to the radical SAM superfamily. Lipoyl synthase family. [4Fe-4S] cluster serves as cofactor.

It is found in the mitochondrion. The enzyme catalyses [[Fe-S] cluster scaffold protein carrying a second [4Fe-4S](2+) cluster] + N(6)-octanoyl-L-lysyl-[protein] + 2 oxidized [2Fe-2S]-[ferredoxin] + 2 S-adenosyl-L-methionine + 4 H(+) = [[Fe-S] cluster scaffold protein] + N(6)-[(R)-dihydrolipoyl]-L-lysyl-[protein] + 4 Fe(3+) + 2 hydrogen sulfide + 2 5'-deoxyadenosine + 2 L-methionine + 2 reduced [2Fe-2S]-[ferredoxin]. It functions in the pathway protein modification; protein lipoylation via endogenous pathway; protein N(6)-(lipoyl)lysine from octanoyl-[acyl-carrier-protein]: step 2/2. Catalyzes the radical-mediated insertion of two sulfur atoms into the C-6 and C-8 positions of the octanoyl moiety bound to the lipoyl domains of lipoate-dependent enzymes, thereby converting the octanoylated domains into lipoylated derivatives. The protein is Lipoyl synthase, mitochondrial of Aspergillus clavatus (strain ATCC 1007 / CBS 513.65 / DSM 816 / NCTC 3887 / NRRL 1 / QM 1276 / 107).